The sequence spans 363 residues: Cytochrome b (363 aa).

Helical transmembrane passes span 23–43, 67–89, 102–122, and 164–184; these read FGFI…MLSF, WFVR…LHIM, SWYS…VGYV, and FFSI…FHLY. Heme b-binding residues include histidine 73 and histidine 87. 2 residues coordinate heme b: histidine 168 and histidine 182. Histidine 187 is an a ubiquinone binding site. A run of 4 helical transmembrane segments spans residues 210 to 230, 271 to 291, 310 to 330, and 332 to 352; these read VLFS…VQSG, VFPT…LLVL, VWTT…SIGK, and VVHV…VLFI.

It belongs to the cytochrome b family. The main subunits of complex b-c1 are: cytochrome b, cytochrome c1 and the Rieske protein. Heme b serves as cofactor.

It localises to the mitochondrion inner membrane. Functionally, component of the ubiquinol-cytochrome c reductase complex (complex III or cytochrome b-c1 complex) that is part of the mitochondrial respiratory chain. The b-c1 complex mediates electron transfer from ubiquinol to cytochrome c. Contributes to the generation of a proton gradient across the mitochondrial membrane that is then used for ATP synthesis. The chain is Cytochrome b (MT-CYB) from Theileria annulata.